A 184-amino-acid chain; its full sequence is Adenine phosphoribosyltransferase (184 aa).

Belongs to the purine/pyrimidine phosphoribosyltransferase family. Homodimer.

Its subcellular location is the cytoplasm. It carries out the reaction AMP + diphosphate = 5-phospho-alpha-D-ribose 1-diphosphate + adenine. It functions in the pathway purine metabolism; AMP biosynthesis via salvage pathway; AMP from adenine: step 1/1. Catalyzes a salvage reaction resulting in the formation of AMP, that is energically less costly than de novo synthesis. The sequence is that of Adenine phosphoribosyltransferase from Shewanella baltica (strain OS223).